Here is a 244-residue protein sequence, read N- to C-terminus: tRNA (guanine-N(7)-)-methyltransferase (244 aa).

Residues Glu-74, Glu-99, Asp-126, and Asp-149 each coordinate S-adenosyl-L-methionine. Asp-149 is an active-site residue. Substrate is bound by residues Lys-153, Asp-185, and 222 to 225; that span reads TKFE.

The protein belongs to the class I-like SAM-binding methyltransferase superfamily. TrmB family.

It carries out the reaction guanosine(46) in tRNA + S-adenosyl-L-methionine = N(7)-methylguanosine(46) in tRNA + S-adenosyl-L-homocysteine. The protein operates within tRNA modification; N(7)-methylguanine-tRNA biosynthesis. Functionally, catalyzes the formation of N(7)-methylguanine at position 46 (m7G46) in tRNA. This chain is tRNA (guanine-N(7)-)-methyltransferase, found in Colwellia psychrerythraea (strain 34H / ATCC BAA-681) (Vibrio psychroerythus).